Here is a 226-residue protein sequence, read N- to C-terminus: Ribonuclease 3 (226 aa).

The 123-residue stretch at 6 to 128 folds into the RNase III domain; sequence MKKLQKFIGY…IIASIFLDSN (123 aa). Glutamate 41 serves as a coordination point for Mg(2+). Aspartate 45 is a catalytic residue. Residues asparagine 114 and glutamate 117 each contribute to the Mg(2+) site. Residue glutamate 117 is part of the active site. The 71-residue stretch at 155–225 folds into the DRBM domain; the sequence is DPKTRLQEYL…AQNALIRLEV (71 aa).

This sequence belongs to the ribonuclease III family. Homodimer. Mg(2+) is required as a cofactor.

The protein localises to the cytoplasm. It catalyses the reaction Endonucleolytic cleavage to 5'-phosphomonoester.. Its function is as follows. Digests double-stranded RNA. Involved in the processing of primary rRNA transcript to yield the immediate precursors to the large and small rRNAs (23S and 16S). Processes some mRNAs, and tRNAs when they are encoded in the rRNA operon. Processes pre-crRNA and tracrRNA of type II CRISPR loci if present in the organism. This is Ribonuclease 3 from Buchnera aphidicola subsp. Cinara cedri (strain Cc).